We begin with the raw amino-acid sequence, 95 residues long: Integration host factor subunit beta (95 aa).

A disordered region spans residues 56 to 76; it reads RAPRTGRNPKTGTSVELDGKY.

Belongs to the bacterial histone-like protein family. In terms of assembly, heterodimer of an alpha and a beta chain.

Functionally, this protein is one of the two subunits of integration host factor, a specific DNA-binding protein that functions in genetic recombination as well as in transcriptional and translational control. This Shewanella denitrificans (strain OS217 / ATCC BAA-1090 / DSM 15013) protein is Integration host factor subunit beta.